The chain runs to 184 residues: NADH-quinone oxidoreductase subunit B (184 aa).

[4Fe-4S] cluster contacts are provided by cysteine 63, cysteine 64, cysteine 128, and cysteine 158.

This sequence belongs to the complex I 20 kDa subunit family. NDH-1 is composed of 14 different subunits. Subunits NuoB, C, D, E, F, and G constitute the peripheral sector of the complex. Requires [4Fe-4S] cluster as cofactor.

The protein resides in the cell inner membrane. The catalysed reaction is a quinone + NADH + 5 H(+)(in) = a quinol + NAD(+) + 4 H(+)(out). Functionally, NDH-1 shuttles electrons from NADH, via FMN and iron-sulfur (Fe-S) centers, to quinones in the respiratory chain. Couples the redox reaction to proton translocation (for every two electrons transferred, four hydrogen ions are translocated across the cytoplasmic membrane), and thus conserves the redox energy in a proton gradient. The polypeptide is NADH-quinone oxidoreductase subunit B (Xanthomonas campestris pv. campestris (strain 8004)).